A 551-amino-acid polypeptide reads, in one-letter code: Cytochrome P450 monooxygenase abl5 (551 aa).

Asparagine 24 carries an N-linked (GlcNAc...) asparagine glycan. The chain crosses the membrane as a helical span at residues 37 to 57 (VVLNTLTAIVVVWICYRAVIY). N-linked (GlcNAc...) asparagine glycosylation is found at asparagine 174, asparagine 218, asparagine 283, asparagine 307, and asparagine 441. Residue cysteine 495 participates in heme binding.

Belongs to the cytochrome P450 family. Requires heme as cofactor.

It localises to the membrane. In terms of biological role, cytochrome P450 monooxygenase; part of the gene cluster that mediates the biosynthesis of abscisic acid (ABA), a phytohormone that acts antagonistically toward salicylic acid (SA), jasmonic acid (JA) and ethylene (ETH) signaling, to impede plant defense responses. The first step of the pathway catalyzes the reaction from farnesyl diphosphate to alpha-ionylideneethane performed by the alpha-ionylideneethane synthase abl3 via a three-step reaction mechanism involving 2 neutral intermediates, beta-farnesene and allofarnesene. The cytochrome P450 monooxygenase abl1 might then be involved in the conversion of alpha-ionylideneethane to alpha-ionylideneacetic acid. Alpha-ionylideneacetic acid is further converted to abscisic acid in 2 steps involving the cytochrome P450 monooxygenase abl2 and the short-chain dehydrogenase/reductase abl4, via the intermediates 1'-deoxy-ABA or 1',4'-trans-diol-ABA, depending on the order of action of these 2 enzymes. Abl2 is responsible for the hydroxylation of carbon atom C-1' and abl4 might be involved in the oxidation of the C-4' carbon atom. The cytochrome monooxygenase abl5 seems not essential for the biosynthesis of ABA and its function remains to be identified. This chain is Cytochrome P450 monooxygenase abl5, found in Leptosphaeria maculans (strain JN3 / isolate v23.1.3 / race Av1-4-5-6-7-8) (Blackleg fungus).